We begin with the raw amino-acid sequence, 265 residues long: Capsule polysaccharide export inner-membrane protein BexB (265 aa).

6 helical membrane passes run 37-57 (IGFL…VMMW), 64-84 (KFST…AMMW), 121-141 (VAGA…IGWI), 148-168 (FYML…GLII), 178-198 (FGKI…AFFF), and 235-255 (ESIG…LVMV). Residues 37 to 258 (IGFLWLFVEP…LMGLVMVKNF (222 aa)) form the ABC transmembrane type-2 domain.

This sequence belongs to the ABC-2 integral membrane protein family.

The protein localises to the cell inner membrane. In terms of biological role, may form an ATP-driven capsule polysaccharide export apparatus, in association with the BexA, BexC and BexD proteins. This Haemophilus influenzae protein is Capsule polysaccharide export inner-membrane protein BexB (bexB).